The chain runs to 203 residues: Holliday junction branch migration complex subunit RuvA (203 aa).

Residues 1-64 (MIGRLNGILV…EDAQLLYGFI (64 aa)) are domain I. Residues 65–143 (TKQERALFRL…SLLEASVGNE (79 aa)) form a domain II region. The tract at residues 144–154 (REFMLQTNYTA) is flexible linker. The segment at 155-203 (PAANAEEDAISALVSLGYKPPQASRAVSKAYKEGMDTETLIKLALKSML) is domain III.

Belongs to the RuvA family. As to quaternary structure, homotetramer. Forms an RuvA(8)-RuvB(12)-Holliday junction (HJ) complex. HJ DNA is sandwiched between 2 RuvA tetramers; dsDNA enters through RuvA and exits via RuvB. An RuvB hexamer assembles on each DNA strand where it exits the tetramer. Each RuvB hexamer is contacted by two RuvA subunits (via domain III) on 2 adjacent RuvB subunits; this complex drives branch migration. In the full resolvosome a probable DNA-RuvA(4)-RuvB(12)-RuvC(2) complex forms which resolves the HJ.

It localises to the cytoplasm. Its function is as follows. The RuvA-RuvB-RuvC complex processes Holliday junction (HJ) DNA during genetic recombination and DNA repair, while the RuvA-RuvB complex plays an important role in the rescue of blocked DNA replication forks via replication fork reversal (RFR). RuvA specifically binds to HJ cruciform DNA, conferring on it an open structure. The RuvB hexamer acts as an ATP-dependent pump, pulling dsDNA into and through the RuvAB complex. HJ branch migration allows RuvC to scan DNA until it finds its consensus sequence, where it cleaves and resolves the cruciform DNA. In Shewanella denitrificans (strain OS217 / ATCC BAA-1090 / DSM 15013), this protein is Holliday junction branch migration complex subunit RuvA.